The sequence spans 329 residues: Ketol-acid reductoisomerase (NADP(+)) (329 aa).

The region spanning 2–182 (TQLFYDTDAD…GGTRAGILET (181 aa)) is the KARI N-terminal Rossmann domain. NADP(+) is bound by residues 25-28 (YGSQ), Ser51, Ser53, and 83-86 (DEFQ). His108 is a catalytic residue. NADP(+) is bound at residue Gly134. The KARI C-terminal knotted domain occupies 183–328 (NFKEETETDL…KGLRSMFSWL (146 aa)). Mg(2+)-binding residues include Asp191, Glu195, Glu227, and Glu231. Position 252 (Ser252) interacts with substrate.

It belongs to the ketol-acid reductoisomerase family. Requires Mg(2+) as cofactor.

The catalysed reaction is (2R)-2,3-dihydroxy-3-methylbutanoate + NADP(+) = (2S)-2-acetolactate + NADPH + H(+). It catalyses the reaction (2R,3R)-2,3-dihydroxy-3-methylpentanoate + NADP(+) = (S)-2-ethyl-2-hydroxy-3-oxobutanoate + NADPH + H(+). Its pathway is amino-acid biosynthesis; L-isoleucine biosynthesis; L-isoleucine from 2-oxobutanoate: step 2/4. It participates in amino-acid biosynthesis; L-valine biosynthesis; L-valine from pyruvate: step 2/4. Involved in the biosynthesis of branched-chain amino acids (BCAA). Catalyzes an alkyl-migration followed by a ketol-acid reduction of (S)-2-acetolactate (S2AL) to yield (R)-2,3-dihydroxy-isovalerate. In the isomerase reaction, S2AL is rearranged via a Mg-dependent methyl migration to produce 3-hydroxy-3-methyl-2-ketobutyrate (HMKB). In the reductase reaction, this 2-ketoacid undergoes a metal-dependent reduction by NADPH to yield (R)-2,3-dihydroxy-isovalerate. The sequence is that of Ketol-acid reductoisomerase (NADP(+)) from Prochlorococcus marinus (strain AS9601).